The following is a 754-amino-acid chain: Nibrin (754 aa).

The region spanning 24–83 is the FHA domain; sequence YVVGRKNCAILIEKDQSISRNHAVLTANFSVTNLSQTDEIPVLALKDNSKYGTFVNEEKM. 2 BRCT domains span residues 105-181 and 224-315; these read KFRI…TEFL and GKTF…LAVI. The mediates interaction with SP100 stretch occupies residues 111–328; the sequence is EPLVACSSCL…TKNYCDPQGH (218 aa). Residues 221-402 form an interaction with MTOR, MAPKAP1 and RICTOR region; the sequence is IFKGKTFIFL…FRMLSQDAPT (182 aa). Phosphoserine; by ATM is present on Ser278. The tract at residues 326 to 346 is disordered; that stretch reads QGHPSTGLKTTTPGPSLSQGL. The segment covering 328 to 346 has biased composition (polar residues); it reads HPSTGLKTTTPGPSLSQGL. Phosphothreonine is present on Thr337. At Ser343 the chain carries Phosphoserine; by ATM. Ser347 is subject to Phosphoserine. Lys388 carries the post-translational modification N6-lactoyllysine. 2 disordered regions span residues 396–415 and 431–475; these read LSQD…NNNS and LSPT…NQEM. At Ser397 the chain carries Phosphoserine. The residue at position 402 (Thr402) is a Phosphothreonine. Polar residues-rich tracts occupy residues 431-440 and 447-462; these read LSPTKLPSIN and SQQQ…FQPS. Ser432 carries the phosphoserine modification. A Glycyl lysine isopeptide (Lys-Gly) (interchain with G-Cter in ubiquitin) cross-link involves residue Lys435. Residues 461 to 467 carry the Nuclear localization signal motif; it reads PSTKKRE. Phosphoserine occurs at positions 509 and 518. Glycyl lysine isopeptide (Lys-Gly) (interchain with G-Cter in SUMO2) cross-links involve residues Lys571 and Lys582. Phosphoserine is present on residues Ser615 and Ser673. Glycyl lysine isopeptide (Lys-Gly) (interchain with G-Cter in ubiquitin) cross-links involve residues Lys686, Lys690, and Lys735. The FxF/Y motif signature appears at 740–749; it reads ADDLFRYNPY.

Belongs to the Nibrin family. Component of the MRN complex composed of two heterodimers RAD50 and MRE11 associated with a single NBN. The MRN complexes dimerize on DNA to form joined MRN-MRN oligomers required for DNA double-strand break repair. The MRN complexes dimerize on DNA to form joined MRN-MRN oligomers required for DNA double-strand break repair. As part of the MRN complex, interacts with MCM9; the interaction recruits the complex to DNA repair sites. Component of the BASC complex, at least composed of BRCA1, MSH2, MSH6, MLH1, ATM, BLM, RAD50, MRE11 and NBN. Interacts with histone H2AX; this requires phosphorylation of H2AX on 'Ser-139' and promotes NBN recruitment to DNA damage sites. Interacts with (phosphorylated) MDC1; promoting NBN recruitment to DNA damage sites. Interacts with (phosphorylated) RAD17; promoting NBN recruitment to DNA damage sites. Interacts (via FxF/Y motif) with ATM. Interacts with HJURP. Interacts with INTS3. Interacts with KPNA2. Interacts with TERF2; interaction is disrupted upon NBN phosphorylation by CDK2. Interacts with (phosphorylated) RBBP8/CtIP; the interaction links the role of the MRN complex in DNA double-strand break sensing to resection. Interacts with SP100; recruits NBN to PML bodies. Interacts with ATF2. Interacts with MTOR, MAPKAP1 isoform 2 and RICTOR; indicative for an association with the mTORC2 complex. Interacts with MRNIP. Interacts with UFL1; promoting UFL1 recruitment to double-strand breaks following DNA damage. Interacts with CYREN (via XLF motif). Post-translationally, phosphorylated by ATM in response of ionizing radiation, and such phosphorylation is responsible intra-S phase checkpoint control and telomere maintenance. Phosphorylated at Ser-432 by CDK2 in S/G2 phases abolishes interaction with TERF2, enabling DCLRE1B/Apollo recruitment to telomeres. Phosphorylation at Ser-432 in response to dysfunctional telomeres promotes non-homologous end joining repair at telomeres, while dephosphorylation by PPP1CA promotes microhomology-mediated end-joining (MMEJ) repair. In terms of processing, ubiquitinated at Lys-435 via 'Lys-6'-linked ubiquitin chains by RNF8, promoting NBN recruitment to DNA double-strand breaks (DSBs). Ubiquitinated at Lys-686 and Lys-689 via 'Lys-63'-linked ubiquitin chains by PELI1: ubiquitination takes place following PELI1 phosphorylation and promotes ATM activation and DNA repair. Ubiquitinated at Lys-735 via 'Lys-63'-linked ubiquitin chains by the SCF(SKP2) complex: ubiquitination takes place following SKP2 phosphorylation and promotes ATM activation and DNA repair. Lactylation at Lys-388 by KAT5 in response to DNA damage promotes recruitment of the MRN complex to DNA damage sites. Delactylated by HDAC3.

It localises to the nucleus. It is found in the chromosome. The protein localises to the PML body. Its subcellular location is the telomere. In terms of biological role, component of the MRN complex, which plays a central role in double-strand break (DSB) repair, DNA recombination, maintenance of telomere integrity and meiosis. The MRN complex is involved in the repair of DNA double-strand breaks (DSBs) via homologous recombination (HR), an error-free mechanism which primarily occurs during S and G2 phases. The complex (1) mediates the end resection of damaged DNA, which generates proper single-stranded DNA, a key initial steps in HR, and is (2) required for the recruitment of other repair factors and efficient activation of ATM and ATR upon DNA damage. The MRN complex possesses single-strand endonuclease activity and double-strand-specific 3'-5' exonuclease activity, which are provided by MRE11, to initiate end resection, which is required for single-strand invasion and recombination. Within the MRN complex, NBN acts as a protein-protein adapter, which specifically recognizes and binds phosphorylated proteins, promoting their recruitment to DNA damage sites. Recruits MRE11 and RAD50 components of the MRN complex to DSBs in response to DNA damage. Promotes the recruitment of PI3/PI4-kinase family members ATM, ATR, and probably DNA-PKcs to the DNA damage sites, activating their functions. Mediates the recruitment of phosphorylated RBBP8/CtIP to DSBs, leading to cooperation between the MRN complex and RBBP8/CtIP to initiate end resection. RBBP8/CtIP specifically promotes the endonuclease activity of the MRN complex to clear DNA ends containing protein adducts. The MRN complex is also required for the processing of R-loops. NBN also functions in telomere length maintenance via its interaction with TERF2: interaction with TERF2 during G1 phase preventing recruitment of DCLRE1B/Apollo to telomeres. NBN also promotes DNA repair choice at dysfunctional telomeres: NBN phosphorylation by CK2 promotes non-homologous end joining repair at telomeres, while unphosphorylated NBN promotes microhomology-mediated end-joining (MMEJ) repair. Enhances AKT1 phosphorylation possibly by association with the mTORC2 complex. This is Nibrin (NBN) from Pongo abelii (Sumatran orangutan).